Here is a 222-residue protein sequence, read N- to C-terminus: Thiamine-phosphate synthase (222 aa).

Residues 44–48 (QVRMK) and Asn-75 contribute to the 4-amino-2-methyl-5-(diphosphooxymethyl)pyrimidine site. The Mg(2+) site is built by Asp-76 and Asp-95. Thr-114 lines the 4-amino-2-methyl-5-(diphosphooxymethyl)pyrimidine pocket. 140-142 (SRS) contacts 2-[(2R,5Z)-2-carboxy-4-methylthiazol-5(2H)-ylidene]ethyl phosphate. 4-amino-2-methyl-5-(diphosphooxymethyl)pyrimidine is bound at residue Lys-143. Residue Gly-171 coordinates 2-[(2R,5Z)-2-carboxy-4-methylthiazol-5(2H)-ylidene]ethyl phosphate.

The protein belongs to the thiamine-phosphate synthase family. It depends on Mg(2+) as a cofactor.

The enzyme catalyses 2-[(2R,5Z)-2-carboxy-4-methylthiazol-5(2H)-ylidene]ethyl phosphate + 4-amino-2-methyl-5-(diphosphooxymethyl)pyrimidine + 2 H(+) = thiamine phosphate + CO2 + diphosphate. It catalyses the reaction 2-(2-carboxy-4-methylthiazol-5-yl)ethyl phosphate + 4-amino-2-methyl-5-(diphosphooxymethyl)pyrimidine + 2 H(+) = thiamine phosphate + CO2 + diphosphate. It carries out the reaction 4-methyl-5-(2-phosphooxyethyl)-thiazole + 4-amino-2-methyl-5-(diphosphooxymethyl)pyrimidine + H(+) = thiamine phosphate + diphosphate. The protein operates within cofactor biosynthesis; thiamine diphosphate biosynthesis; thiamine phosphate from 4-amino-2-methyl-5-diphosphomethylpyrimidine and 4-methyl-5-(2-phosphoethyl)-thiazole: step 1/1. Its function is as follows. Condenses 4-methyl-5-(beta-hydroxyethyl)thiazole monophosphate (THZ-P) and 2-methyl-4-amino-5-hydroxymethyl pyrimidine pyrophosphate (HMP-PP) to form thiamine monophosphate (TMP). This Anaeromyxobacter dehalogenans (strain 2CP-C) protein is Thiamine-phosphate synthase.